The primary structure comprises 312 residues: Methionyl-tRNA formyltransferase (312 aa).

A (6S)-5,6,7,8-tetrahydrofolate-binding site is contributed by Ser109 to Pro112.

This sequence belongs to the Fmt family.

It carries out the reaction L-methionyl-tRNA(fMet) + (6R)-10-formyltetrahydrofolate = N-formyl-L-methionyl-tRNA(fMet) + (6S)-5,6,7,8-tetrahydrofolate + H(+). Functionally, attaches a formyl group to the free amino group of methionyl-tRNA(fMet). The formyl group appears to play a dual role in the initiator identity of N-formylmethionyl-tRNA by promoting its recognition by IF2 and preventing the misappropriation of this tRNA by the elongation apparatus. The protein is Methionyl-tRNA formyltransferase of Dictyoglomus thermophilum (strain ATCC 35947 / DSM 3960 / H-6-12).